The following is a 299-amino-acid chain: tRNA dimethylallyltransferase (299 aa).

Residue 8 to 15 (GPTASGKT) coordinates ATP. 10–15 (TASGKT) serves as a coordination point for substrate. Positions 33–36 (DSQQ) are interaction with substrate tRNA.

The protein belongs to the IPP transferase family. As to quaternary structure, monomer. It depends on Mg(2+) as a cofactor.

It catalyses the reaction adenosine(37) in tRNA + dimethylallyl diphosphate = N(6)-dimethylallyladenosine(37) in tRNA + diphosphate. Catalyzes the transfer of a dimethylallyl group onto the adenine at position 37 in tRNAs that read codons beginning with uridine, leading to the formation of N6-(dimethylallyl)adenosine (i(6)A). The chain is tRNA dimethylallyltransferase from Anaeromyxobacter dehalogenans (strain 2CP-C).